The following is a 485-amino-acid chain: Malonate-semialdehyde dehydrogenase (485 aa).

NAD(+) contacts are provided by Phe-155, Lys-179, Glu-182, Arg-183, and Ser-232. Cys-287 acts as the Nucleophile in catalysis. Glu-386 is a binding site for NAD(+).

Belongs to the aldehyde dehydrogenase family. IolA subfamily. As to quaternary structure, homotetramer.

The catalysed reaction is 3-oxopropanoate + NAD(+) + CoA + H2O = hydrogencarbonate + acetyl-CoA + NADH + H(+). It catalyses the reaction 2-methyl-3-oxopropanoate + NAD(+) + CoA + H2O = propanoyl-CoA + hydrogencarbonate + NADH + H(+). Its pathway is polyol metabolism; myo-inositol degradation into acetyl-CoA; acetyl-CoA from myo-inositol: step 7/7. Its function is as follows. Catalyzes the oxidation of malonate semialdehyde (MSA) and methylmalonate semialdehyde (MMSA) into acetyl-CoA and propanoyl-CoA, respectively. Is involved in a myo-inositol catabolic pathway. Bicarbonate, and not CO2, is the end-product of the enzymatic reaction. This is Malonate-semialdehyde dehydrogenase from Halalkalibacterium halodurans (strain ATCC BAA-125 / DSM 18197 / FERM 7344 / JCM 9153 / C-125) (Bacillus halodurans).